Consider the following 612-residue polypeptide: Membrane protein insertase YidC (612 aa).

7 helical membrane-spanning segments follow: residues 4–24, 329–349, 358–378, 434–454, 484–504, 524–544, and 546–566; these read NTII…YLNH, LVPL…IPIF, VNLG…LFPL, ILLQ…AIGL, FLGN…ILNT, LTMY…PAGL, and YYYL…RGLV.

The protein belongs to the OXA1/ALB3/YidC family. Type 1 subfamily. In terms of assembly, interacts with the Sec translocase complex via SecD. Specifically interacts with transmembrane segments of nascent integral membrane proteins during membrane integration.

The protein localises to the cell inner membrane. In terms of biological role, required for the insertion and/or proper folding and/or complex formation of integral membrane proteins into the membrane. Involved in integration of membrane proteins that insert both dependently and independently of the Sec translocase complex, as well as at least some lipoproteins. Aids folding of multispanning membrane proteins. This Azobacteroides pseudotrichonymphae genomovar. CFP2 protein is Membrane protein insertase YidC.